We begin with the raw amino-acid sequence, 456 residues long: Argininosuccinate lyase (456 aa).

It belongs to the lyase 1 family. Argininosuccinate lyase subfamily.

It is found in the cytoplasm. It catalyses the reaction 2-(N(omega)-L-arginino)succinate = fumarate + L-arginine. It participates in amino-acid biosynthesis; L-arginine biosynthesis; L-arginine from L-ornithine and carbamoyl phosphate: step 3/3. The sequence is that of Argininosuccinate lyase from Shewanella amazonensis (strain ATCC BAA-1098 / SB2B).